The sequence spans 217 residues: RING-H2 finger protein ATL40 (217 aa).

The helical transmembrane segment at I28–L48 threads the bilayer. The RING-type; atypical zinc-finger motif lies at C100 to R142. 2 stretches are compositionally biased toward basic and acidic residues: residues T143–P160 and D186–Q217. A disordered region spans residues T143–Q217.

This sequence belongs to the RING-type zinc finger family. ATL subfamily.

It localises to the membrane. It catalyses the reaction S-ubiquitinyl-[E2 ubiquitin-conjugating enzyme]-L-cysteine + [acceptor protein]-L-lysine = [E2 ubiquitin-conjugating enzyme]-L-cysteine + N(6)-ubiquitinyl-[acceptor protein]-L-lysine.. It participates in protein modification; protein ubiquitination. The chain is RING-H2 finger protein ATL40 (ATL40) from Arabidopsis thaliana (Mouse-ear cress).